The sequence spans 371 residues: Solute carrier family 35 member F6 (371 aa).

The N-terminal stretch at 1–18 (MAWTKYQLFLAGLMLVTG) is a signal peptide. 2 consecutive transmembrane segments (helical) span residues 48–68 (FLQA…FYLL) and 89–109 (LLFL…YVAL). The EamA domain occupies 104–160 (LMYVALNMTSASSFQMLRGAVIIFTGLFSVAFLGRRLVLSQWLGILATIAGLVVVGL). Asparagine 110 is a glycosylation site (N-linked (GlcNAc...) asparagine). A run of 7 helical transmembrane segments spans residues 117–137 (FQML…AFLG), 140–160 (LVLS…VVGL), 176–196 (VITG…QMVL), 216–236 (GLFG…IPAG), 261–281 (LIAV…FAGI), 295–312 (LDSL…ALGW), and 317–336 (ALQI…YNGL). The segment at 352-371 (EESEQERLLGGTRTPINDAS) is disordered. Threonine 365 carries the phosphothreonine modification.

The protein belongs to the SLC35F solute transporter family. As to quaternary structure, interacts with SLC25A5. Expressed in pancreatic ductal adenocarcinoma (PDAC) (at protein level). Strongly expressed in prostate and thyroid. Weakly expressed in lung, heart, liver and kidney.

It localises to the mitochondrion. The protein resides in the lysosome membrane. Functionally, involved in the maintenance of mitochondrial membrane potential in pancreatic ductal adenocarcinoma (PDAC) cells. Promotes pancreatic ductal adenocarcinoma (PDAC) cell growth. May play a role as a nucleotide-sugar transporter. This Homo sapiens (Human) protein is Solute carrier family 35 member F6 (SLC35F6).